Here is a 294-residue protein sequence, read N- to C-terminus: Ribosomal protein L11 methyltransferase (294 aa).

Positions 144, 165, 187, and 229 each coordinate S-adenosyl-L-methionine.

It belongs to the methyltransferase superfamily. PrmA family.

It localises to the cytoplasm. It carries out the reaction L-lysyl-[protein] + 3 S-adenosyl-L-methionine = N(6),N(6),N(6)-trimethyl-L-lysyl-[protein] + 3 S-adenosyl-L-homocysteine + 3 H(+). In terms of biological role, methylates ribosomal protein L11. In Pseudomonas aeruginosa (strain LESB58), this protein is Ribosomal protein L11 methyltransferase.